A 186-amino-acid chain; its full sequence is Threonylcarbamoyl-AMP synthase (186 aa).

One can recognise a YrdC-like domain in the interval 2–186 (VSNLQQVVKA…ARTEQLLRQG (185 aa)).

The protein belongs to the SUA5 family. TsaC subfamily.

Its subcellular location is the cytoplasm. It catalyses the reaction L-threonine + hydrogencarbonate + ATP = L-threonylcarbamoyladenylate + diphosphate + H2O. Functionally, required for the formation of a threonylcarbamoyl group on adenosine at position 37 (t(6)A37) in tRNAs that read codons beginning with adenine. Catalyzes the conversion of L-threonine, HCO(3)(-)/CO(2) and ATP to give threonylcarbamoyl-AMP (TC-AMP) as the acyladenylate intermediate, with the release of diphosphate. The polypeptide is Threonylcarbamoyl-AMP synthase (Vibrio vulnificus (strain CMCP6)).